A 162-amino-acid chain; its full sequence is Ubiquitin-fold modifier-conjugating enzyme 1 (162 aa).

The active-site Glycyl thioester intermediate is the C115.

This sequence belongs to the ubiquitin-conjugating enzyme family. UFC1 subfamily. As to quaternary structure, interacts with uba-5.

In terms of biological role, E2-like enzyme which forms an intermediate with ufm-1. The intermediate is formed via a thioester linkage. This Caenorhabditis briggsae protein is Ubiquitin-fold modifier-conjugating enzyme 1.